We begin with the raw amino-acid sequence, 474 residues long: Lipoprotein lipase (474 aa).

The N-terminal stretch at 1–27 (MESKALLLVVLGVWLQSLTAFRGGVAA) is a signal peptide. Positions 32-53 (RDFSDIESKFALRTPEDTAEDT) are interaction with GPIHBP1. A disulfide bond links Cys-54 and Cys-67. Asn-70 carries N-linked (GlcNAc...) asparagine glycosylation. The residue at position 121 (Tyr-121) is a 3'-nitrotyrosine. Ser-159 (nucleophile) is an active-site residue. Asp-183 serves as the catalytic Charge relay system. At Tyr-191 the chain carries 3'-nitrotyrosine. Ca(2+) is bound by residues Ala-194, Arg-197, Ser-199, and Asp-202. Cys-243 and Cys-266 are disulfide-bonded. An essential for determining substrate specificity region spans residues 243–266 (CNIGEAIRVIAERGLGDVDQLVKC). His-268 (charge relay system) is an active-site residue. Disulfide bonds link Cys-291-Cys-310 and Cys-302-Cys-305. Positions 341–464 (FHYQVKIHFS…KGKDSAVFVK (124 aa)) constitute a PLAT domain. A 3'-nitrotyrosine modification is found at Tyr-343. Asn-386 carries an N-linked (GlcNAc...) asparagine glycan. An important for interaction with lipoprotein particles region spans residues 417-421 (WPDWW). Positions 430-434 (RIRVK) are important for heparin binding. Positions 443–467 (IFCAREKVSHLQKGKDSAVFVKCHD) are interaction with GPIHBP1. Residues Cys-445 and Cys-465 are joined by a disulfide bond.

The protein belongs to the AB hydrolase superfamily. Lipase family. In terms of assembly, homodimer. Interacts with GPIHBP1 with 1:1 stoichiometry. Interacts with APOC2; the interaction activates LPL activity in the presence of lipids. Interaction with heparan sulfate proteoglycans is required to protect LPL against loss of activity. Associates with lipoprotein particles in blood plasma. Interacts with LMF1 and SEL1L; interaction with SEL1L is required to prevent aggregation of newly synthesized LPL in the endoplasmic reticulum (ER), and for normal export of LPL from the ER to the extracellular space. Interacts with SORL1; SORL1 acts as a sorting receptor, promoting LPL localization to endosomes and later to lysosomes, leading to degradation of newly synthesized LPL. Post-translationally, tyrosine nitration after lipopolysaccharide (LPS) challenge down-regulates the lipase activity. In terms of processing, N-glycosylated. In terms of tissue distribution, detected in white and brown adipose tissue and heart muscle, especially at the lumenal surface of capillaries. Detected on capillary endothelium in the lactating mammary gland. Detected in blood plasma (at protein level). Expressed in liver, epididymal fat, heart, psoas muscle, lactating mammary gland, adrenal, lung, and ovary. Highest levels in heart and adrenal gland.

The protein resides in the cell membrane. Its subcellular location is the secreted. The protein localises to the extracellular space. It localises to the extracellular matrix. The enzyme catalyses a triacylglycerol + H2O = a diacylglycerol + a fatty acid + H(+). The catalysed reaction is a 1,2-diacyl-sn-glycero-3-phosphocholine + H2O = a 2-acyl-sn-glycero-3-phosphocholine + a fatty acid + H(+). It carries out the reaction 1,2,3-tri-(9Z-octadecenoyl)-glycerol + H2O = di-(9Z)-octadecenoylglycerol + (9Z)-octadecenoate + H(+). It catalyses the reaction 1,2-di-(9Z-octadecenoyl)-sn-glycero-3-phosphocholine + H2O = (9Z-octadecenoyl)-sn-glycero-3-phosphocholine + (9Z)-octadecenoate + H(+). The enzyme catalyses 1,2,3-tributanoylglycerol + H2O = dibutanoylglycerol + butanoate + H(+). The catalysed reaction is 1,2-dihexadecanoyl-sn-glycero-3-phosphocholine + H2O = hexadecanoyl-sn-glycero-3-phosphocholine + hexadecanoate + H(+). With respect to regulation, the apolipoprotein APOC2 acts as a coactivator of LPL activity. Ca(2+) binding promotes protein stability and formation of the active homodimer. Interaction with GPIHBP1 protects LPL against inactivation by ANGPTL4. Key enzyme in triglyceride metabolism. Catalyzes the hydrolysis of triglycerides from circulating chylomicrons and very low density lipoproteins (VLDL), and thereby plays an important role in lipid clearance from the blood stream, lipid utilization and storage. Although it has both phospholipase and triglyceride lipase activities it is primarily a triglyceride lipase with low but detectable phospholipase activity. Mediates margination of triglyceride-rich lipoprotein particles in capillaries. Recruited to its site of action on vascular endothelium by binding to GPIHBP1 and cell surface heparan sulfate proteoglycans. The sequence is that of Lipoprotein lipase (Lpl) from Mus musculus (Mouse).